A 317-amino-acid polypeptide reads, in one-letter code: Petrobactin-binding protein YclQ (317 aa).

Residues 1 to 19 (MKKFALLFIALVTAVVISA) form the signal peptide. Residue cysteine 20 is the site of N-palmitoyl cysteine attachment. Cysteine 20 carries S-diacylglycerol cysteine lipidation. One can recognise a Fe/B12 periplasmic-binding domain in the interval 56 to 317 (KVVVFDFGSL…IKEVKDGLEK (262 aa)).

This sequence belongs to the bacterial solute-binding protein 8 family. In terms of assembly, the complex is composed of two ATP-binding proteins (YclP), two transmembrane proteins (YclN and YclO) and a solute-binding protein (YclQ). Interacts with FloT.

It localises to the cell membrane. Its subcellular location is the membrane raft. In terms of biological role, part of the ABC transporter complex YclNOPQ involved in uptake of ferric-petrobactin. Petrobactin is a photoreactive 3,4-catecholate siderophore produced by many members of the B.cereus group, including B.anthracis. Binds selectively iron-free and ferric petrobactin and the petrobactin precursor 3,4-dihydroxybenzoic acid (3,4-DHB). The polypeptide is Petrobactin-binding protein YclQ (yclQ) (Bacillus subtilis (strain 168)).